A 437-amino-acid polypeptide reads, in one-letter code: Serine carboxypeptidase-like 10 (437 aa).

The first 21 residues, 1 to 21 (MGSTLKHLLLLLLVLIRHVDS), serve as a signal peptide directing secretion. 3 disulfides stabilise this stretch: Cys-80/Cys-327, Cys-243/Cys-257, and Cys-281/Cys-293. N-linked (GlcNAc...) asparagine glycosylation occurs at Asn-101. Ser-175 is an active-site residue. Asn-328 carries an N-linked (GlcNAc...) asparagine glycan. Asp-362 is a catalytic residue. A glycan (N-linked (GlcNAc...) asparagine) is linked at Asn-378. The active site involves His-415. Asn-422 carries N-linked (GlcNAc...) asparagine glycosylation.

Belongs to the peptidase S10 family. Expressed in senescent leaves.

The protein resides in the secreted. Its function is as follows. Involved in the biosynthesis of sinapoylated anthocyanins. The sequence is that of Serine carboxypeptidase-like 10 (SCPL10) from Arabidopsis thaliana (Mouse-ear cress).